Reading from the N-terminus, the 596-residue chain is Elongation factor 4 (596 aa).

The region spanning 2-184 is the tr-type G domain; the sequence is KHIRNFSIIA…VIVEQIPPPE (183 aa). GTP is bound by residues 14-19 and 131-134; these read DHGKST and NKID.

Belongs to the TRAFAC class translation factor GTPase superfamily. Classic translation factor GTPase family. LepA subfamily.

Its subcellular location is the cell inner membrane. It catalyses the reaction GTP + H2O = GDP + phosphate + H(+). Functionally, required for accurate and efficient protein synthesis under certain stress conditions. May act as a fidelity factor of the translation reaction, by catalyzing a one-codon backward translocation of tRNAs on improperly translocated ribosomes. Back-translocation proceeds from a post-translocation (POST) complex to a pre-translocation (PRE) complex, thus giving elongation factor G a second chance to translocate the tRNAs correctly. Binds to ribosomes in a GTP-dependent manner. This chain is Elongation factor 4, found in Shewanella oneidensis (strain ATCC 700550 / JCM 31522 / CIP 106686 / LMG 19005 / NCIMB 14063 / MR-1).